A 470-amino-acid polypeptide reads, in one-letter code: Putative multidrug resistance protein MdtD (470 aa).

At 1–11 the chain is on the periplasmic side; sequence MTELPDNTRWQ. A helical membrane pass occupies residues 12-32; it reads LWIVALGFFMQSLDTTIVNTA. Residues 33-48 lie on the Cytoplasmic side of the membrane; it reads LPSMAKSLGESPLHMH. Residues 49 to 69 form a helical membrane-spanning segment; the sequence is MVVVSYVLTVAVMLPASGWLA. Over 70 to 76 the chain is Periplasmic; sequence DKIGVRN. A helical membrane pass occupies residues 77 to 97; the sequence is IFFAAIVLFTLGSLFCALSGT. Topologically, residues 98–101 are cytoplasmic; it reads LNQL. The helical transmembrane segment at 102-124 threads the bilayer; that stretch reads VLARVLQGVGGAMMVPVGRLTVM. The Periplasmic portion of the chain corresponds to 125-137; that stretch reads KIVPRAQYMAAMT. The chain crosses the membrane as a helical span at residues 138 to 158; sequence FVTLPGQIGPLLGPALGGVLV. The Cytoplasmic segment spans residues 159–164; that stretch reads EYASWH. Residues 165-185 form a helical membrane-spanning segment; that stretch reads WIFLINIPVGIVGAMATFMLM. Topologically, residues 186–196 are periplasmic; the sequence is PNYTIETRRFD. A helical transmembrane segment spans residues 197-217; the sequence is LPGFLLLAIGMAVLTLALDGS. Over 218–221 the chain is Cytoplasmic; that stretch reads KSMG. A helical membrane pass occupies residues 222-242; it reads ISPWTLAGLAAGGAAAILLYL. Over 243–262 the chain is Periplasmic; sequence LHAKKNSGALFSLRLFCTPT. Residues 263–283 form a helical membrane-spanning segment; the sequence is FSLGLLGSFAGRIGSGMLPFM. Residues 284–285 lie on the Cytoplasmic side of the membrane; that stretch reads TP. A helical membrane pass occupies residues 286–306; sequence VFLQIGLGFSPFHAGLMMIPM. The Periplasmic segment spans residues 307-341; the sequence is VLGSMGMKRIVVQIVNRFGYRRVLVATTLGLALVS. A helical membrane pass occupies residues 342–362; sequence LLFMSVALLGWYYLLPLVLLL. Residues 363–395 are Cytoplasmic-facing; the sequence is QGMVNSARFSSMNTLTLKDLPDTLASSGNSLLS. A helical membrane pass occupies residues 396–416; the sequence is MIMQLSMSIGVTIAGMLLGMF. Over 417-430 the chain is Periplasmic; it reads GQQHIGIDSSATHH. A helical transmembrane segment spans residues 431–451; it reads VFMYTWLCMAVIIALPAIIFA. At 452–470 the chain is on the cytoplasmic side; sequence RVPNDTQQNMVISRRKRSL.

It belongs to the major facilitator superfamily. TCR/Tet family.

Its subcellular location is the cell inner membrane. The chain is Putative multidrug resistance protein MdtD from Salmonella paratyphi B (strain ATCC BAA-1250 / SPB7).